The primary structure comprises 296 residues: Coiled-coil domain-containing protein 69 (296 aa).

A compositionally biased stretch (basic residues) spans 1–18; the sequence is MGCRHSRLSSCKPPKKKR. The segment at 1–41 is disordered; sequence MGCRHSRLSSCKPPKKKRQEPEPEQPPRPEPHELGPLNGDT. A lipid anchor (N-myristoyl glycine) is attached at Gly-2. A compositionally biased stretch (basic and acidic residues) spans 19–33; sequence QEPEPEQPPRPEPHE. A coiled-coil region spans residues 48–272; that stretch reads CASEEAERHQ…QEKEELLYRV (225 aa). Phosphoserine is present on residues Ser-154 and Ser-241.

This sequence belongs to the CCDC69 family. In terms of tissue distribution, highly expressed in duodenum, esophagus, pancreas, prostate, salivary gland, thymus and urinary bladder.

Its subcellular location is the cytoplasm. It is found in the cytoskeleton. The protein localises to the spindle. It localises to the midbody. In terms of biological role, may act as a scaffold to regulate the recruitment and assembly of spindle midzone components. Required for the localization of AURKB and PLK1 to the spindle midzone. The chain is Coiled-coil domain-containing protein 69 from Homo sapiens (Human).